A 1060-amino-acid chain; its full sequence is Carbamoyl phosphate synthase large chain (1060 aa).

The segment at 1-401 (MPKRTDIRKI…SLLKAVRSLE (401 aa)) is carboxyphosphate synthetic domain. Residues R129, R169, G175, G176, Q208, I210, E215, G241, I242, H243, Q284, and E298 each coordinate ATP. Residues 133–327 (KNLMNQLNEP…IAKMAAKIAV (195 aa)) form the ATP-grasp 1 domain. Positions 284, 298, and 300 each coordinate Mg(2+). The Mn(2+) site is built by Q284, E298, and N300. The oligomerization domain stretch occupies residues 402–546 (IGTAHLELDG…YTTYEQENES (145 aa)). The interval 547 to 929 (LVSAKPSILV…ALYKAFEASG (383 aa)) is carbamoyl phosphate synthetic domain. Positions 671–861 (DQLIQELNIP…MAQLATQLIL (191 aa)) constitute an ATP-grasp 2 domain. ATP-binding residues include R707, R746, L748, E752, G777, V778, H779, S780, Q820, and E832. 3 residues coordinate Mg(2+): Q820, E832, and N834. Residues Q820, E832, and N834 each coordinate Mn(2+). One can recognise an MGS-like domain in the interval 930–1060 (MHLPSHGNVL…ESQSLLTKPL (131 aa)). Positions 930 to 1060 (MHLPSHGNVL…ESQSLLTKPL (131 aa)) are allosteric domain.

It belongs to the CarB family. Composed of two chains; the small (or glutamine) chain promotes the hydrolysis of glutamine to ammonia, which is used by the large (or ammonia) chain to synthesize carbamoyl phosphate. Tetramer of heterodimers (alpha,beta)4. The cofactor is Mg(2+). It depends on Mn(2+) as a cofactor.

The catalysed reaction is hydrogencarbonate + L-glutamine + 2 ATP + H2O = carbamoyl phosphate + L-glutamate + 2 ADP + phosphate + 2 H(+). The enzyme catalyses hydrogencarbonate + NH4(+) + 2 ATP = carbamoyl phosphate + 2 ADP + phosphate + 2 H(+). It functions in the pathway amino-acid biosynthesis; L-arginine biosynthesis; carbamoyl phosphate from bicarbonate: step 1/1. It participates in pyrimidine metabolism; UMP biosynthesis via de novo pathway; (S)-dihydroorotate from bicarbonate: step 1/3. Functionally, large subunit of the glutamine-dependent carbamoyl phosphate synthetase (CPSase). CPSase catalyzes the formation of carbamoyl phosphate from the ammonia moiety of glutamine, carbonate, and phosphate donated by ATP, constituting the first step of 2 biosynthetic pathways, one leading to arginine and/or urea and the other to pyrimidine nucleotides. The large subunit (synthetase) binds the substrates ammonia (free or transferred from glutamine from the small subunit), hydrogencarbonate and ATP and carries out an ATP-coupled ligase reaction, activating hydrogencarbonate by forming carboxy phosphate which reacts with ammonia to form carbamoyl phosphate. The sequence is that of Carbamoyl phosphate synthase large chain from Latilactobacillus sakei subsp. sakei (strain 23K) (Lactobacillus sakei subsp. sakei).